Here is a 1043-residue protein sequence, read N- to C-terminus: MAASFPPTLGLSSAPDEIQHPHIKFSEWKFKLFRVRSFEKTPEEAQKEKKDSFEGKPSLEQSPAVLDKADGQKPVPTQPLLKAHPKFSKKFHDNEKARGKAIHQANLRHLCRICGNSFRADEHNRRYPVHGPVDGKTLGLLRKKEKRATSWPDLIAKVFRIDVKADVDSIHPTEFCHNCWSIMHRKFSSAPCEVYFPRNVTMEWHPHTPSCDICNTARRGLKRKSLQPNLQLSKKLKTVLDQARQARQHKRRAQARISSKDVMKKIANCSKIHLSTKLLAVDFPEHFVKSISCQICEHILADPVETNCKHVFCRVCILRCLKVMGSYCPSCRYPCFPTDLESPVKSFLSVLNSLMVKCPAKECNEEVSLEKYNHHISSHKESKEIFVHINKGGRPRQHLLSLTRRAQKHRLRELKLQVKAFADKEEGGDVKSVCMTLFLLALRARNEHRQADELEAIMQGKGSGLQPAVCLAIRVNTFLSCSQYHKMYRTVKAITGRQIFQPLHALRNAEKVLLPGYHHFEWQPPLKNVSSSTDVGIIDGLSGLSSSVDDYPVDTIAKRFRYDSALVSALMDMEEDILEGMRSQDLDDYLNGPFTVVVKESCDGMGDVSEKHGSGPVVPEKAVRFSFTIMKITIAHSSQNVKVFEEAKPNSELCCKPLCLMLADESDHETLTAILSPLIAEREAMKSSELMLELGGILRTFKFIFRGTGYDEKLVREVEGLEASGSVYICTLCDATRLEASQNLVFHSITRSHAENLERYEVWRSNPYHESVEELRDRVKGVSAKPFIETVPSIDALHCDIGNAAEFYKIFQLEIGEVYKNPNASKEERKRWQATLDKHLRKKMNLKPIMRMNGNFARKLMTKETVDAVCELIPSEERHEALRELMDLYLKMKPVWRSSCPAKECPESLCQYSFNSQRFAELLSTKFKYRYEGKITNYFHKTLAHVPEIIERDGSIGAWASEGNESGNKLFRRFRKMNARQSKCYEMEDVLKHHWLYTSKYLQKFMNAHNALKTSGFTMNPQASLGDPLGIEDSLESQDSMEF.

An interaction with importin alpha-1 region spans residues 1–288; sequence MAASFPPTLG…LAVDFPEHFV (288 aa). Positions 40 to 54 are enriched in basic and acidic residues; the sequence is KTPEEAQKEKKDSFE. Residues 40-80 form a disordered region; it reads KTPEEAQKEKKDSFEGKPSLEQSPAVLDKADGQKPVPTQPL. Residue lysine 234 forms a Glycyl lysine isopeptide (Lys-Gly) (interchain with G-Cter in ubiquitin) linkage. Zn(2+) is bound by residues cysteine 269, histidine 273, cysteine 293, cysteine 296, histidine 298, cysteine 308, histidine 310, cysteine 313, cysteine 316, cysteine 328, cysteine 331, cysteine 358, cysteine 363, histidine 375, and histidine 379. The segment at 293-332 adopts an RING-type zinc-finger fold; sequence CQICEHILADPVETNCKHVFCRVCILRCLKVMGSYCPSCR. An RAG1-type zinc finger spans residues 354–383; that stretch reads LMVKCPAKECNEEVSLEKYNHHISSHKESK. The NBD DNA-binding region spans 392–459; that stretch reads GGRPRQHLLS…QADELEAIMQ (68 aa). Positions 603, 711, and 965 each coordinate a divalent metal cation.

The protein belongs to the RAG1 family. Homodimer. Component of the RAG complex composed of core components RAG1 and RAG2, and associated component HMGB1 or HMGB2. Interacts with DCAF1, leading to recruitment of the CUL4A-RBX1-DDB1-DCAF1/VPRBP complex to ubiquitinate proteins and limit error-prone repair during V(D)J recombination. Mg(2+) serves as cofactor. Requires Mn(2+) as cofactor. In terms of processing, autoubiquitinated in the presence of CDC34/UBCH3. In terms of tissue distribution, maturing lymphoid cells.

It localises to the nucleus. It catalyses the reaction S-ubiquitinyl-[E2 ubiquitin-conjugating enzyme]-L-cysteine + [acceptor protein]-L-lysine = [E2 ubiquitin-conjugating enzyme]-L-cysteine + N(6)-ubiquitinyl-[acceptor protein]-L-lysine.. Functionally, catalytic component of the RAG complex, a multiprotein complex that mediates the DNA cleavage phase during V(D)J recombination. V(D)J recombination assembles a diverse repertoire of immunoglobulin and T-cell receptor genes in developing B and T-lymphocytes through rearrangement of different V (variable), in some cases D (diversity), and J (joining) gene segments. In the RAG complex, RAG1 mediates the DNA-binding to the conserved recombination signal sequences (RSS) and catalyzes the DNA cleavage activities by introducing a double-strand break between the RSS and the adjacent coding segment. RAG2 is not a catalytic component but is required for all known catalytic activities. DNA cleavage occurs in 2 steps: a first nick is introduced in the top strand immediately upstream of the heptamer, generating a 3'-hydroxyl group that can attack the phosphodiester bond on the opposite strand in a direct transesterification reaction, thereby creating 4 DNA ends: 2 hairpin coding ends and 2 blunt, 5'-phosphorylated ends. The chromatin structure plays an essential role in the V(D)J recombination reactions and the presence of histone H3 trimethylated at 'Lys-4' (H3K4me3) stimulates both the nicking and haipinning steps. The RAG complex also plays a role in pre-B cell allelic exclusion, a process leading to expression of a single immunoglobulin heavy chain allele to enforce clonality and monospecific recognition by the B-cell antigen receptor (BCR) expressed on individual B-lymphocytes. The introduction of DNA breaks by the RAG complex on one immunoglobulin allele induces ATM-dependent repositioning of the other allele to pericentromeric heterochromatin, preventing accessibility to the RAG complex and recombination of the second allele. In addition to its endonuclease activity, RAG1 also acts as an E3 ubiquitin-protein ligase that mediates monoubiquitination of histone H3. Histone H3 monoubiquitination is required for the joining step of V(D)J recombination. Mediates polyubiquitination of KPNA1. The sequence is that of V(D)J recombination-activating protein 1 (RAG1) from Homo sapiens (Human).